The following is a 274-amino-acid chain: uncharacterized protein (274 aa).

The segment at 235 to 274 (ETFDTQQDPKKTPETDKNAAYKGKEKKGKKEERGPRSIMK) is disordered. The span at 241-274 (QDPKKTPETDKNAAYKGKEKKGKKEERGPRSIMK) shows a compositional bias: basic and acidic residues.

This is an uncharacterized protein from Treponema pallidum (strain Nichols).